The following is a 590-amino-acid chain: Muscarinic acetylcholine receptor M3 (590 aa).

Residues 1-67 are Extracellular-facing; it reads MTLHNNNTTS…DPLGGHTIWQ (67 aa). N-linked (GlcNAc...) asparagine glycans are attached at residues asparagine 6, asparagine 7, asparagine 15, asparagine 41, asparagine 48, and asparagine 53. A helical transmembrane segment spans residues 68–91; sequence VVFIAFLTGVLALVTIIGNILVIV. Residues 92 to 104 are Cytoplasmic-facing; sequence AFKVNKQLKTVNN. Residues 105-125 form a helical membrane-spanning segment; sequence YFLLSLACADLIIGVISMNLF. The Extracellular portion of the chain corresponds to 126–142; it reads TTYIIMNRWALGNLACD. Cysteine 141 and cysteine 221 are joined by a disulfide. The helical transmembrane segment at 143–164 threads the bilayer; sequence LWLSIDYVASNASVMNLLVISF. At 165-184 the chain is on the cytoplasmic side; the sequence is DRYFSITRPLTYRAKRTTKR. A helical membrane pass occupies residues 185–207; it reads AGVMIGLAWVISFILWAPAILFW. At 208-229 the chain is on the extracellular side; that stretch reads QYFVGKRTVPPGECFIQFLSEP. Residues 230–252 form a helical membrane-spanning segment; it reads TITFGTAIAAFYMPVTIMTILYW. Over 253–492 the chain is Cytoplasmic; the sequence is RIYKETEKRT…LIKEKKAAQT (240 aa). The Basolateral sorting signal signature appears at 275 to 281; sequence AEAENFV. Residues 324 to 357 form a disordered region; that stretch reads AEQMDQDHSSSDSWNNNDAAASLENSASSDEEDI. Low complexity predominate over residues 334-345; the sequence is SDSWNNNDAAAS. Serine 385 bears the Phosphoserine mark. The tract at residues 398–419 is disordered; sequence SVGLERKPSKLQTQQSMDDGGS. A compositionally biased stretch (polar residues) spans 407-419; sequence KLQTQQSMDDGGS. The helical transmembrane segment at 493–513 threads the bilayer; the sequence is LSAILLAFIITWTPYNIMVLV. The Extracellular portion of the chain corresponds to 514-527; the sequence is NTFCDSCIPKTYWN. Residues 528–547 form a helical membrane-spanning segment; the sequence is LGYWLCYINSTVNPVCYALC. The Cytoplasmic portion of the chain corresponds to 548–590; the sequence is NKTFRNTFKMLLLCQCDKRKRRKQQYQQRQSVIFHKRVPEQAL.

This sequence belongs to the G-protein coupled receptor 1 family. Muscarinic acetylcholine receptor subfamily. CHRM3 sub-subfamily. As to quaternary structure, homodimer; the dimers can form tetramers. Interacts with NALCN. Interacts with TMEM147.

The protein localises to the cell membrane. The protein resides in the postsynaptic cell membrane. It localises to the basolateral cell membrane. Its subcellular location is the endoplasmic reticulum membrane. Its function is as follows. The muscarinic acetylcholine receptor mediates various cellular responses, including inhibition of adenylate cyclase, breakdown of phosphoinositides and modulation of potassium channels through the action of G proteins. Primary transducing effect is Pi turnover. The polypeptide is Muscarinic acetylcholine receptor M3 (CHRM3) (Bos taurus (Bovine)).